A 163-amino-acid chain; its full sequence is Ribonuclease H (163 aa).

The 142-residue stretch at Thr16–Thr157 folds into the RNase H type-1 domain. The Mg(2+) site is built by Asp25, Glu63, Asp85, and Asp149.

This sequence belongs to the RNase H family. As to quaternary structure, monomer. The cofactor is Mg(2+).

The protein resides in the cytoplasm. The enzyme catalyses Endonucleolytic cleavage to 5'-phosphomonoester.. Functionally, endonuclease that specifically degrades the RNA of RNA-DNA hybrids. The protein is Ribonuclease H of Pelobacter propionicus (strain DSM 2379 / NBRC 103807 / OttBd1).